We begin with the raw amino-acid sequence, 113 residues long: Endoribonuclease SymE (113 aa).

Residues S29–A74 enclose the SpoVT-AbrB domain.

The protein belongs to the SymE family.

The protein resides in the cytoplasm. Its function is as follows. Involved in the degradation and recycling of damaged RNA. It is itself a target for degradation by the ATP-dependent protease Lon. The protein is Endoribonuclease SymE of Escherichia coli (strain ATCC 8739 / DSM 1576 / NBRC 3972 / NCIMB 8545 / WDCM 00012 / Crooks).